The chain runs to 865 residues: Protein translocase subunit SecA (865 aa).

ATP contacts are provided by residues glutamine 93, 111-115, and aspartate 501; that span reads GEGKT. Residues cysteine 841, cysteine 843, cysteine 852, and cysteine 853 each contribute to the Zn(2+) site.

The protein belongs to the SecA family. As to quaternary structure, monomer and homodimer. Part of the essential Sec protein translocation apparatus which comprises SecA, SecYEG and auxiliary proteins SecDF-YajC and YidC. Zn(2+) serves as cofactor.

The protein localises to the cell inner membrane. It localises to the cytoplasm. The catalysed reaction is ATP + H2O + cellular proteinSide 1 = ADP + phosphate + cellular proteinSide 2.. In terms of biological role, part of the Sec protein translocase complex. Interacts with the SecYEG preprotein conducting channel. Has a central role in coupling the hydrolysis of ATP to the transfer of proteins into and across the cell membrane, serving as an ATP-driven molecular motor driving the stepwise translocation of polypeptide chains across the membrane. This is Protein translocase subunit SecA from Helicobacter pylori (strain ATCC 700392 / 26695) (Campylobacter pylori).